A 48-amino-acid polypeptide reads, in one-letter code: Thiamine thiazole synthase, chloroplastic (48 aa).

The substrate site is built by Ala18 and Val40.

Belongs to the THI4 family. As to quaternary structure, homooctamer. It depends on Fe cation as a cofactor.

Its subcellular location is the plastid. The protein resides in the chloroplast. The catalysed reaction is [ADP-thiazole synthase]-L-cysteine + glycine + NAD(+) = [ADP-thiazole synthase]-dehydroalanine + ADP-5-ethyl-4-methylthiazole-2-carboxylate + nicotinamide + 3 H2O + 2 H(+). Functionally, involved in biosynthesis of the thiamine precursor thiazole. Catalyzes the conversion of NAD and glycine to adenosine diphosphate 5-(2-hydroxyethyl)-4-methylthiazole-2-carboxylic acid (ADT), an adenylated thiazole intermediate. The reaction includes an iron-dependent sulfide transfer from a conserved cysteine residue of the protein to a thiazole intermediate. The enzyme can only undergo a single turnover, which suggests it is a suicide enzyme. May have additional roles in adaptation to various stress conditions and in DNA damage tolerance. The chain is Thiamine thiazole synthase, chloroplastic (THI1) from Populus euphratica (Euphrates poplar).